A 793-amino-acid chain; its full sequence is RNA-binding protein spenito (793 aa).

Disordered stretches follow at residues 1 to 93 (MSSH…PPAE) and 243 to 296 (HHDY…KKDK). Residues 25 to 42 (SRSPGPASRSSLSRNSRS) are compositionally biased toward low complexity. The segment covering 257 to 268 (RGGHPHHLHGHA) has biased composition (basic residues). A compositionally biased stretch (basic and acidic residues) spans 285–296 (APYEKPESKKDK). RRM domains follow at residues 314–391 (RTLF…YGKV) and 395–469 (TRMW…FAEL). Positions 507–623 (YAPRGGYSPY…RNDALASAST (117 aa)) are disordered. Basic residues predominate over residues 526–536 (GGYRGRGRGMY). Over residues 566–593 (DEWRRPPGESYDRGARSSSREPGVERSR) the composition is skewed to basic and acidic residues. The SPOC domain maps to 624–791 (VPDVARKCST…HLVIVVVRGG (168 aa)).

Belongs to the RRM Spen family. Component of the WMM complex, a N6-methyltransferase complex composed of a catalytic subcomplex, named MAC, and of an associated subcomplex, named MACOM. The MAC subcomplex is composed of Ime4/Mettl3 and Mettl14. The MACOM subcomplex is composed of fl(2)d, Flacc/Xio, Hakai, vir, and, in some cases of nito. Interacts with Sxl. Interacts with Hipk; leading to phosphorylation. Phosphorylated by Hipk at Ser-23, Ser-25 and/or Ser-27; the precise position if phosphorylation sites is unknown. Widely expressed. Shows some enrichment in the central nervous system.

It is found in the nucleus. In terms of biological role, RNA-binding protein that acts as an associated component of the WMM complex, a complex that mediates N6-methyladenosine (m6A) methylation of mRNAs. M6a modification plays a role in the efficiency of mRNA splicing and is required for sex determination. In the WMM complex, may act by binding target RNAs and recruiting the WMM complex. Required for sex determination and dosage compensation via Sxl alternative splicing: m6A methylation acts as a key regulator of Sxl pre-mRNA and promotes female-specific alternative splicing of Sxl, which determines female physiognomy. M6A methylation is also required for neuronal functions. Acts as a positive regulator of canonical Wg signaling during wing disk and eye development. The polypeptide is RNA-binding protein spenito (Drosophila melanogaster (Fruit fly)).